The chain runs to 421 residues: Gamma-glutamyl phosphate reductase (421 aa).

This sequence belongs to the gamma-glutamyl phosphate reductase family.

It is found in the cytoplasm. It carries out the reaction L-glutamate 5-semialdehyde + phosphate + NADP(+) = L-glutamyl 5-phosphate + NADPH + H(+). It functions in the pathway amino-acid biosynthesis; L-proline biosynthesis; L-glutamate 5-semialdehyde from L-glutamate: step 2/2. Functionally, catalyzes the NADPH-dependent reduction of L-glutamate 5-phosphate into L-glutamate 5-semialdehyde and phosphate. The product spontaneously undergoes cyclization to form 1-pyrroline-5-carboxylate. The sequence is that of Gamma-glutamyl phosphate reductase from Brucella melitensis biotype 1 (strain ATCC 23456 / CCUG 17765 / NCTC 10094 / 16M).